Consider the following 20-residue polypeptide: Pregnancy-associated glycoprotein 75 (20 aa).

This sequence belongs to the peptidase A1 family. Post-translationally, N-glycosylated. In terms of tissue distribution, expressed in chorionic epithelium (trophectoderm).

The protein localises to the secreted. The polypeptide is Pregnancy-associated glycoprotein 75 (Bubalus bubalis (Domestic water buffalo)).